The chain runs to 141 residues: DUF35 domain-containing scaffold protein (141 aa).

Zn(2+)-binding residues include Cys-30, Cys-33, Cys-44, and Cys-47.

This sequence belongs to the scaffold protein DUF35 family. Interacts with acetoacetyl-CoA thiolase and HMG-CoA synthase (HMGCS) that catalyzes the first and second step in the mevalonate pathway, respectively.

Its function is as follows. Functions as a scaffold to connect the acetoacetyl-CoA thiolase and HMG-CoA synthase (HMGCS) dimers in the channeling thiolase/HMGCS complex, which allows for efficient coupling of the endergonic thiolase reaction with the exergonic HMGCS reaction. This is DUF35 domain-containing scaffold protein from Methanocaldococcus jannaschii (strain ATCC 43067 / DSM 2661 / JAL-1 / JCM 10045 / NBRC 100440) (Methanococcus jannaschii).